Reading from the N-terminus, the 252-residue chain is Imidazole glycerol phosphate synthase subunit HisF (252 aa).

Residues D11 and D130 contribute to the active site.

It belongs to the HisA/HisF family. As to quaternary structure, heterodimer of HisH and HisF.

The protein resides in the cytoplasm. It carries out the reaction 5-[(5-phospho-1-deoxy-D-ribulos-1-ylimino)methylamino]-1-(5-phospho-beta-D-ribosyl)imidazole-4-carboxamide + L-glutamine = D-erythro-1-(imidazol-4-yl)glycerol 3-phosphate + 5-amino-1-(5-phospho-beta-D-ribosyl)imidazole-4-carboxamide + L-glutamate + H(+). Its pathway is amino-acid biosynthesis; L-histidine biosynthesis; L-histidine from 5-phospho-alpha-D-ribose 1-diphosphate: step 5/9. IGPS catalyzes the conversion of PRFAR and glutamine to IGP, AICAR and glutamate. The HisF subunit catalyzes the cyclization activity that produces IGP and AICAR from PRFAR using the ammonia provided by the HisH subunit. In Staphylococcus aureus (strain USA300), this protein is Imidazole glycerol phosphate synthase subunit HisF.